The following is a 63-amino-acid chain: Large ribosomal subunit protein bL35 (63 aa).

Belongs to the bacterial ribosomal protein bL35 family.

The protein is Large ribosomal subunit protein bL35 of Campylobacter jejuni subsp. doylei (strain ATCC BAA-1458 / RM4099 / 269.97).